The following is a 25-amino-acid chain: MNERVKQVASALVDAIQKTLTEQRV.

It belongs to the intradiol ring-cleavage dioxygenase family. Fe(3+) serves as cofactor.

The catalysed reaction is 3,5-dichlorocatechol + O2 = (2E,4E)-2,4-dichloromuconate + 2 H(+). Its pathway is xenobiotic degradation; 2-(2,4-dichlorophenoxy)propanoate degradation. This is Chlorocatechol 1,2-dioxygenase 1 (tfdC) from Delftia acidovorans (Pseudomonas acidovorans).